The following is a 46-amino-acid chain: Diuretic hormone class 1 (46 aa).

Residue I46 is modified to Isoleucine amide.

The protein resides in the secreted. Regulation of fluid secretion. Stimulates primary urine secretion by Malpighian tubules and causes a dose-dependent stimulation of cAMP levels in the tubules. Has a greater effect on the transport of Na(+) then K(+) ions. In vitro, has synergistic effects with the smaller diuretic hormone DH(31) which co-occurs with it. This Diploptera punctata (Pacific beetle cockroach) protein is Diuretic hormone class 1.